The chain runs to 485 residues: MSDASSTAPSQAGATSQSTGSRTLLDKIWDQHLVHAPESGPAIIYIDLHLVHEVTSPQAFEGLRINNRPVRRPERTIATPDHNVPTSDRSLPIADPISRKQIETLRENCKEFGVQLFDIDDVRQGIVHVIGPENGYTQPGMTIVCGDSHTATHGAFGSLAFGIGTSEVEHVLATQTLLQFKPKTFELRVDGELARGVTAKDMILYLIGQIGTAGGTGYVLEFTGDAVRNLTMEERMTVCNMSIEAGARAGMIAPDQTTFDYLRGRPECPADFDAAVEAWKKLPSDPGATYDRSNLYKGSDIRPQVTWGTNPGQVCSVDSVVPSPGDSTDVNVQKSTASALQYMDLKAGTPITEIEINRVFIGSCTNARIEDLRAAAAVIKGHHCSDKVNAMIVPGSGKVKLQAEEEGLHKVFTDAGFDWREAGCSMCLAMNPDKLAPGERCASTSNRNFEGRQGKGGRTHLVSPAMAAAAAIKGHFVDIRDWDYR.

2 disordered regions span residues 1 to 20 (MSDA…QSTG) and 73 to 92 (PERT…RSLP). Residues cysteine 364, cysteine 424, and cysteine 427 each contribute to the [4Fe-4S] cluster site.

The protein belongs to the aconitase/IPM isomerase family. LeuC type 1 subfamily. In terms of assembly, heterodimer of LeuC and LeuD. The cofactor is [4Fe-4S] cluster.

It carries out the reaction (2R,3S)-3-isopropylmalate = (2S)-2-isopropylmalate. The protein operates within amino-acid biosynthesis; L-leucine biosynthesis; L-leucine from 3-methyl-2-oxobutanoate: step 2/4. Catalyzes the isomerization between 2-isopropylmalate and 3-isopropylmalate, via the formation of 2-isopropylmaleate. This chain is 3-isopropylmalate dehydratase large subunit, found in Rhodopirellula baltica (strain DSM 10527 / NCIMB 13988 / SH1).